The following is a 461-amino-acid chain: GTPase Der (461 aa).

EngA-type G domains lie at 9-171 (KTIA…DLNQ) and 200-371 (IQVG…ECFS). GTP-binding positions include 15-22 (GQPNVGKS), 62-66 (DTGGM), 123-126 (NKID), 206-213 (GRVNVGKS), 253-257 (DTAGI), and 317-320 (NKWD). The KH-like domain occupies 372–456 (KRIPTSLLNS…PLILNAKDKK (85 aa)).

Belongs to the TRAFAC class TrmE-Era-EngA-EngB-Septin-like GTPase superfamily. EngA (Der) GTPase family. Associates with the 50S ribosomal subunit.

GTPase that plays an essential role in the late steps of ribosome biogenesis. The chain is GTPase Der from Helicobacter pylori (strain Shi470).